A 230-amino-acid polypeptide reads, in one-letter code: Somatolactin (230 aa).

The signal sequence occupies residues 1 to 23 (MKKTTVLQVCMVFVVCSLQAVIG). Cystine bridges form between Cys28–Cys38, Cys87–Cys202, and Cys219–Cys227. Residue Asn226 is glycosylated (N-linked (GlcNAc...) asparagine).

Belongs to the somatotropin/prolactin family.

Its subcellular location is the secreted. The polypeptide is Somatolactin (Carassius auratus (Goldfish)).